A 1079-amino-acid polypeptide reads, in one-letter code: Tudor domain-containing protein 7A (1079 aa).

An HTH OST-type 1 domain is found at 3–76 (DVELVKKMLR…TGEVMCFAGV (74 aa)). A disordered region spans residues 153 to 175 (LPSSRAPAWQMNRKSPVPEKTSV). 2 HTH OST-type domains span residues 205-270 (DVEL…RLVY) and 366-434 (LTTE…ILYT). 2 Tudor domains span residues 519–576 (SPKI…FMTL) and 708–765 (RPFC…FLKE).

This sequence belongs to the TDRD7 family.

It is found in the cytoplasm. Component of specific cytoplasmic RNA granules involved in post-transcriptional regulation of specific genes: probably acts by binding to specific mRNAs and regulating their translation. Probably required during spermatogenesis. Required for structural integrity of granules in primordial germ cells (PGCs). This is Tudor domain-containing protein 7A (tdrd7a) from Danio rerio (Zebrafish).